A 551-amino-acid polypeptide reads, in one-letter code: Scaffold protein D13 ortholog (551 aa).

This sequence belongs to the poxviridae protein D13 family. As to quaternary structure, homotrimer. Self-assembles to form a layer. Interacts with A17 (via N-terminus); this interaction is necessary for D13 association with membranes.

It is found in the membrane. In terms of biological role, scaffold protein which forms a transitory spherical honeycomb lattice providing curvature and rigidity to the convex membrane of crescent and immature virions (IV). This association occurs concomitantly with viral membrane formation. Targeted by the drug rifampicin, which prevents the formation of this lattice, and hence virus morphogenesis. In the presence of rifampicin, irregularly shaped membranes that lack the honeycomb layer accumulate around areas of electron-dense viroplasm. This layer is lost from virions during maturation from IV to mature virion (MV), through the proteolysis of A17 N-terminus. The sequence is that of Scaffold protein D13 ortholog from Sus scrofa (Pig).